Consider the following 635-residue polypeptide: Threonine--tRNA ligase (635 aa).

In terms of domain architecture, TGS spans Met-1–Thr-61. Positions Asp-242–Pro-533 are catalytic. Zn(2+) contacts are provided by Cys-333, His-384, and His-510.

Belongs to the class-II aminoacyl-tRNA synthetase family. In terms of assembly, homodimer. Zn(2+) serves as cofactor.

The protein localises to the cytoplasm. It carries out the reaction tRNA(Thr) + L-threonine + ATP = L-threonyl-tRNA(Thr) + AMP + diphosphate + H(+). In terms of biological role, catalyzes the attachment of threonine to tRNA(Thr) in a two-step reaction: L-threonine is first activated by ATP to form Thr-AMP and then transferred to the acceptor end of tRNA(Thr). Also edits incorrectly charged L-seryl-tRNA(Thr). In Paraburkholderia xenovorans (strain LB400), this protein is Threonine--tRNA ligase.